A 180-amino-acid chain; its full sequence is Adenine phosphoribosyltransferase (180 aa).

It belongs to the purine/pyrimidine phosphoribosyltransferase family. In terms of assembly, homodimer.

The protein resides in the cytoplasm. It catalyses the reaction AMP + diphosphate = 5-phospho-alpha-D-ribose 1-diphosphate + adenine. The protein operates within purine metabolism; AMP biosynthesis via salvage pathway; AMP from adenine: step 1/1. In terms of biological role, catalyzes a salvage reaction resulting in the formation of AMP, that is energically less costly than de novo synthesis. The protein is Adenine phosphoribosyltransferase of Agrobacterium fabrum (strain C58 / ATCC 33970) (Agrobacterium tumefaciens (strain C58)).